Reading from the N-terminus, the 111-residue chain is uncharacterized protein (111 aa).

It belongs to the asfivirus E111R family.

This is an uncharacterized protein from African swine fever virus (strain Badajoz 1971 Vero-adapted) (Ba71V).